Consider the following 149-residue polypeptide: Transcriptional repressor NrdR (149 aa).

A zinc finger lies at 3–34 (CPFCAMEETKVIDSRLVSDGYQVRRRRECGYC). The ATP-cone domain occupies 49-139 (PKIIKNDGSR…VYLSFDDINQ (91 aa)).

This sequence belongs to the NrdR family. The cofactor is Zn(2+).

Functionally, negatively regulates transcription of bacterial ribonucleotide reductase nrd genes and operons by binding to NrdR-boxes. The polypeptide is Transcriptional repressor NrdR (Histophilus somni (strain 129Pt) (Haemophilus somnus)).